The sequence spans 262 residues: ATP synthase subunit a (262 aa).

The next 5 membrane-spanning stretches (helical) occupy residues 25–45 (NVHI…LAVF), 86–106 (VAPL…IDLI), 130–150 (DISA…FYTV), 204–226 (LIFI…GIPL), and 240–260 (LQAF…YNKA).

It belongs to the ATPase A chain family. In terms of assembly, F-type ATPases have 2 components, CF(1) - the catalytic core - and CF(0) - the membrane proton channel. CF(1) has five subunits: alpha(3), beta(3), gamma(1), delta(1), epsilon(1). CF(0) has three main subunits: a(1), b(2) and c(9-12). The alpha and beta chains form an alternating ring which encloses part of the gamma chain. CF(1) is attached to CF(0) by a central stalk formed by the gamma and epsilon chains, while a peripheral stalk is formed by the delta and b chains.

The protein localises to the cell inner membrane. Key component of the proton channel; it plays a direct role in the translocation of protons across the membrane. In Mannheimia succiniciproducens (strain KCTC 0769BP / MBEL55E), this protein is ATP synthase subunit a.